The sequence spans 552 residues: Ribosomal lysine N-methyltransferase 3 (552 aa).

The SET domain occupies 26–335; sequence SKCDIRESPL…QGQEIFNSYG (310 aa). Residue Tyr-334 participates in S-adenosyl-L-methionine binding. The interval 399–432 is disordered; sequence EDEEDEDGQAKSDNLSDDIESEEEEEEEEGDDSL. Residues 413–432 are compositionally biased toward acidic residues; that stretch reads LSDDIESEEEEEEEEGDDSL.

The protein belongs to the class V-like SAM-binding methyltransferase superfamily.

Its subcellular location is the nucleus. Functionally, S-adenosyl-L-methionine-dependent protein-lysine N-methyltransferase that monomethylates 60S ribosomal protein L42 (RPL42A and RPL42B) at 'Lys-40'. The sequence is that of Ribosomal lysine N-methyltransferase 3 from Saccharomyces cerevisiae (strain ATCC 204508 / S288c) (Baker's yeast).